We begin with the raw amino-acid sequence, 721 residues long: YTH domain-containing protein 1 (721 aa).

A compositionally biased stretch (acidic residues) spans Glu-29–Asp-38. Positions Glu-29 to Lys-239 are disordered. A compositionally biased stretch (low complexity) spans Ser-48–Ser-75. Residues Ala-135–Pro-151 are compositionally biased toward basic and acidic residues. One can recognise a YTH domain in the interval Thr-254–Phe-391. RNA contacts are provided by residues Lys-260 to Asn-262, Trp-276, and Trp-327. Disordered regions lie at residues Pro-424–His-471, Asp-580–Pro-605, and Ala-651–Arg-721. Residues Gly-432–Gly-443 are compositionally biased toward gly residues. Over residues Pro-451–His-471 the composition is skewed to basic residues. Residues Gly-583 to Gly-600 are compositionally biased toward pro residues. Residues Ala-651–Gly-670 are compositionally biased toward gly residues. The segment covering Arg-699–Gly-708 has biased composition (basic and acidic residues).

The protein localises to the nucleus. Regulator of alternative splicing that specifically recognizes and binds N6-methyladenosine (m6A)-containing RNAs. Acts by acting as a reader of m6A methylation. Required for sex determination and dosage compensation via Sxl alternative splicing: m6A methylation acts as a key regulator of Sxl pre-mRNA and promotes female-specific alternative splicing of Sxl, which determines female physiognomy. M6A methylation is also required for neuronal functions. The polypeptide is YTH domain-containing protein 1 (Drosophila melanogaster (Fruit fly)).